The sequence spans 300 residues: Probable mitochondrial 2-oxodicarboxylate carrier (300 aa).

A disordered region spans residues 1-20; sequence MTSKGNAGNPPTPTPAPVKS. 3 Solcar repeats span residues 21 to 104, 114 to 200, and 209 to 295; these read QPLW…YEKQ, PTQM…IKSA, and GVLV…VMKL. The next 6 membrane-spanning stretches (helical) occupy residues 27-47, 74-93, 120-140, 171-191, 209-229, and 278-298; these read LVSGGIAGVSEILVMYPLDVV, LKMYRGIVPPILVEAPKRAI, IGSGVLAGITEAFIVVPFELV, GFFKGLESTIWRHACWNGGYF, GVLVNNFIAGGLAGTFGTMLN, and LGPGGGILLVVNEFVMKLLAG.

Belongs to the mitochondrial carrier (TC 2.A.29) family.

It is found in the mitochondrion inner membrane. It catalyses the reaction 2-oxoadipate(in) + 2-oxoglutarate(out) = 2-oxoadipate(out) + 2-oxoglutarate(in). The catalysed reaction is hexanedioate(in) + 2-oxoglutarate(out) = hexanedioate(out) + 2-oxoglutarate(in). It carries out the reaction L-2-aminoadipate(in) + 2-oxoglutarate(out) = L-2-aminoadipate(out) + 2-oxoglutarate(in). The enzyme catalyses glutarate(in) + 2-oxoglutarate(out) = glutarate(out) + 2-oxoglutarate(in). It catalyses the reaction 2-oxoheptanedioate(in) + 2-oxoglutarate(out) = 2-oxoheptanedioate(out) + 2-oxoglutarate(in). The catalysed reaction is heptanedioate(in) + 2-oxoglutarate(out) = heptanedioate(out) + 2-oxoglutarate(in). It carries out the reaction citrate(in) + 2-oxoglutarate(out) = citrate(out) + 2-oxoglutarate(in). Transports dicarboxylates across the inner membranes of mitochondria by a counter-exchange mechanism. Can transport 2-oxoadipate (2-oxohexanedioate), 2-oxoglutarate, adipate (hexanedioate), glutarate, and to a lesser extent, pimelate (heptanedioate), 2-oxopimelate (2-oxoheptanedioate), 2-aminoadipate (2-aminohexanedioate), oxaloacetate, and citrate. Plays a central role in catabolism of lysine, hydroxylysine, and tryptophan, by transporting common metabolite intermediates (such as 2-oxoadipate) into the mitochondria, where it is converted into acetyl-CoA and can enter the citric acid (TCA) cycle. In Dictyostelium discoideum (Social amoeba), this protein is Probable mitochondrial 2-oxodicarboxylate carrier (mcfT).